Here is a 309-residue protein sequence, read N- to C-terminus: Porphobilinogen deaminase (309 aa).

Cys-242 is subject to S-(dipyrrolylmethanemethyl)cysteine.

Belongs to the HMBS family. In terms of assembly, monomer. Dipyrromethane serves as cofactor.

The catalysed reaction is 4 porphobilinogen + H2O = hydroxymethylbilane + 4 NH4(+). It participates in porphyrin-containing compound metabolism; protoporphyrin-IX biosynthesis; coproporphyrinogen-III from 5-aminolevulinate: step 2/4. Functionally, tetrapolymerization of the monopyrrole PBG into the hydroxymethylbilane pre-uroporphyrinogen in several discrete steps. The polypeptide is Porphobilinogen deaminase (Shewanella sediminis (strain HAW-EB3)).